A 512-amino-acid chain; its full sequence is Glutamyl-tRNA(Gln) amidotransferase subunit A (512 aa).

Active-site charge relay system residues include Lys82 and Ser157. The Acyl-ester intermediate role is filled by Ser181.

This sequence belongs to the amidase family. GatA subfamily. Heterotrimer of A, B and C subunits.

It carries out the reaction L-glutamyl-tRNA(Gln) + L-glutamine + ATP + H2O = L-glutaminyl-tRNA(Gln) + L-glutamate + ADP + phosphate + H(+). In terms of biological role, allows the formation of correctly charged Gln-tRNA(Gln) through the transamidation of misacylated Glu-tRNA(Gln) in organisms which lack glutaminyl-tRNA synthetase. The reaction takes place in the presence of glutamine and ATP through an activated gamma-phospho-Glu-tRNA(Gln). This is Glutamyl-tRNA(Gln) amidotransferase subunit A from Bordetella pertussis (strain Tohama I / ATCC BAA-589 / NCTC 13251).